The primary structure comprises 210 residues: Probable GTP-binding protein EngB (210 aa).

Residues 25–199 form the EngB-type G domain; the sequence is RGIEVAFAGR…RQKLDSWFSE (175 aa). GTP is bound by residues 33 to 40, 60 to 64, 78 to 81, 145 to 148, and 178 to 180; these read GRSNAGKS, GRTQL, DLPG, TKAD, and FSS. Mg(2+) contacts are provided by Ser-40 and Thr-62.

Belongs to the TRAFAC class TrmE-Era-EngA-EngB-Septin-like GTPase superfamily. EngB GTPase family. The cofactor is Mg(2+).

Its function is as follows. Necessary for normal cell division and for the maintenance of normal septation. In Salmonella paratyphi B (strain ATCC BAA-1250 / SPB7), this protein is Probable GTP-binding protein EngB.